The chain runs to 275 residues: Diaminopimelate epimerase (275 aa).

Positions 13, 46, and 66 each coordinate substrate. The active-site Proton donor is the C75. Substrate is bound by residues 76 to 77 (GN), N159, N192, and 210 to 211 (ER). C219 acts as the Proton acceptor in catalysis. 220 to 221 (GT) serves as a coordination point for substrate.

Belongs to the diaminopimelate epimerase family. Homodimer.

It localises to the cytoplasm. The catalysed reaction is (2S,6S)-2,6-diaminopimelate = meso-2,6-diaminopimelate. It participates in amino-acid biosynthesis; L-lysine biosynthesis via DAP pathway; DL-2,6-diaminopimelate from LL-2,6-diaminopimelate: step 1/1. Functionally, catalyzes the stereoinversion of LL-2,6-diaminopimelate (L,L-DAP) to meso-diaminopimelate (meso-DAP), a precursor of L-lysine and an essential component of the bacterial peptidoglycan. The polypeptide is Diaminopimelate epimerase (Psychromonas ingrahamii (strain DSM 17664 / CCUG 51855 / 37)).